The chain runs to 201 residues: Potassium-transporting ATPase KdpC subunit (201 aa).

Residues 9-29 (ILVMLALTLITGLLYPLAMTV) form a helical membrane-spanning segment. 2 stretches are compositionally biased toward polar residues: residues 73–84 (TTAADPNDSTKT) and 91–101 (AANSSGSNLGP). A disordered region spans residues 73–103 (TTAADPNDSTKTVPAPYNAANSSGSNLGPTS).

The protein belongs to the KdpC family. The system is composed of three essential subunits: KdpA, KdpB and KdpC.

It localises to the cell inner membrane. Its function is as follows. Part of the high-affinity ATP-driven potassium transport (or Kdp) system, which catalyzes the hydrolysis of ATP coupled with the electrogenic transport of potassium into the cytoplasm. This subunit acts as a catalytic chaperone that increases the ATP-binding affinity of the ATP-hydrolyzing subunit KdpB by the formation of a transient KdpB/KdpC/ATP ternary complex. The sequence is that of Potassium-transporting ATPase KdpC subunit from Bradyrhizobium sp. (strain BTAi1 / ATCC BAA-1182).